Consider the following 350-residue polypeptide: Dihydroorotate dehydrogenase (quinone) (350 aa).

FMN is bound by residues 65-69 (AGLDK) and T89. Substrate is bound at residue K69. 114 to 118 (NRLGF) is a substrate binding site. 2 residues coordinate FMN: N149 and N182. N182 is a binding site for substrate. Catalysis depends on S185, which acts as the Nucleophile. N187 contacts substrate. 2 residues coordinate FMN: K227 and T255. 256-257 (NT) contacts substrate. FMN contacts are provided by residues G278, G307, and 328–329 (YT).

The protein belongs to the dihydroorotate dehydrogenase family. Type 2 subfamily. In terms of assembly, monomer. Requires FMN as cofactor.

The protein localises to the cell membrane. It catalyses the reaction (S)-dihydroorotate + a quinone = orotate + a quinol. It functions in the pathway pyrimidine metabolism; UMP biosynthesis via de novo pathway; orotate from (S)-dihydroorotate (quinone route): step 1/1. In terms of biological role, catalyzes the conversion of dihydroorotate to orotate with quinone as electron acceptor. The sequence is that of Dihydroorotate dehydrogenase (quinone) from Polaromonas naphthalenivorans (strain CJ2).